The chain runs to 301 residues: MTQTRARTVFLLAHTGRPAAIRSAELVVQGLLRSGLGVRVLEAEAADLPLPDEVELVKEATPQCLDGCELLIVLGGDGTLLRGAEFARASGVPMLGVNLGRVGFLAEAERDDLDKVVDRVVTKAYEVEERMTVDVVVHKNGDIVHTDWALNEAAVQKVSAERLLEVVLEIDGRPVTGFGCDGIVCATPTGSTAYAFSAGGPVVWPEVEALLMVPISAHALFAKPLVTSPNSVLAVEVQPDTPHGVLWCDGRRTVELPQGARVEVRRGAVPVRLARLHHASFTDRLVAKFALPVAGWRGAPH.

Aspartate 77 (proton acceptor) is an active-site residue. NAD(+) contacts are provided by residues 77–78 (DG), arginine 82, 151–152 (NE), arginine 162, aspartate 181, and 192–197 (TAYAFS).

This sequence belongs to the NAD kinase family. The cofactor is a divalent metal cation.

The protein resides in the cytoplasm. The catalysed reaction is NAD(+) + ATP = ADP + NADP(+) + H(+). In terms of biological role, involved in the regulation of the intracellular balance of NAD and NADP, and is a key enzyme in the biosynthesis of NADP. Catalyzes specifically the phosphorylation on 2'-hydroxyl of the adenosine moiety of NAD to yield NADP. In Streptomyces avermitilis (strain ATCC 31267 / DSM 46492 / JCM 5070 / NBRC 14893 / NCIMB 12804 / NRRL 8165 / MA-4680), this protein is NAD kinase 2.